The primary structure comprises 556 residues: PTS system fructose-specific EIIB'BC component (556 aa).

PTS EIIB type-2 domains lie at 1–85 (MKLF…LANG) and 106–201 (IVAV…KAFK). The active-site Phosphocysteine intermediate; for EIIB activity is the Cys112. Phosphocysteine; by EIIA is present on Cys112. The PTS EIIC type-2 domain maps to 224-556 (VYKHLMTGVS…AIIKSKNNAE (333 aa)). 10 helical membrane-spanning segments follow: residues 237 to 257 (PLVV…FNVI), 275 to 295 (SGVA…FSIA), 302 to 322 (VGLI…GGII), 324 to 344 (GFLA…PASL), 349 to 369 (PILI…IYLI), 390 to 410 (VNAI…MGGP), 431 to 451 (MAAA…ATWI), 468 to 488 (FVLG…ADPI), 490 to 510 (VIIS…GLNI), and 529 to 549 (LKYL…YAII).

Its subcellular location is the cell inner membrane. The enzyme catalyses D-fructose(out) + N(pros)-phospho-L-histidyl-[protein] = D-fructose 1-phosphate(in) + L-histidyl-[protein]. Its function is as follows. The phosphoenolpyruvate-dependent sugar phosphotransferase system (sugar PTS), a major carbohydrate active transport system, catalyzes the phosphorylation of incoming sugar substrates concomitantly with their translocation across the cell membrane. The enzyme II FruAB PTS system is involved in fructose transport. This is PTS system fructose-specific EIIB'BC component from Haemophilus influenzae (strain ATCC 51907 / DSM 11121 / KW20 / Rd).